Consider the following 549-residue polypeptide: Oxygen-dependent choline dehydrogenase (549 aa).

An FAD-binding site is contributed by 4-33 (DFVIIGSGSAGSALAYRLSEDGKNSVLVIE). H465 functions as the Proton acceptor in the catalytic mechanism.

The protein belongs to the GMC oxidoreductase family. Requires FAD as cofactor.

The catalysed reaction is choline + A = betaine aldehyde + AH2. The enzyme catalyses betaine aldehyde + NAD(+) + H2O = glycine betaine + NADH + 2 H(+). Its pathway is amine and polyamine biosynthesis; betaine biosynthesis via choline pathway; betaine aldehyde from choline (cytochrome c reductase route): step 1/1. Functionally, involved in the biosynthesis of the osmoprotectant glycine betaine. Catalyzes the oxidation of choline to betaine aldehyde and betaine aldehyde to glycine betaine at the same rate. The polypeptide is Oxygen-dependent choline dehydrogenase (Rhizobium etli (strain CIAT 652)).